The primary structure comprises 111 residues: BET1-like protein (111 aa).

Residues 1–86 (MADWARAQSP…MARSGRDNRK (86 aa)) are Cytoplasmic-facing. Ser9 and Ser37 each carry phosphoserine. The region spanning 15–77 (EILDRENKRM…TGSVKRFSTM (63 aa)) is the t-SNARE coiled-coil homology domain. Residues 87-107 (LLCGVAVGLIVAFFILSYLLS) form a helical; Anchor for type IV membrane protein membrane-spanning segment. Topologically, residues 108 to 111 (RART) are lumenal.

As to quaternary structure, component of a SNARE complex consisting of STX5, YKT6, GOSR1 and BET1L. Interacts with STX5.

The protein localises to the golgi apparatus membrane. Its subcellular location is the golgi apparatus. It is found in the trans-Golgi network membrane. Functionally, vesicle SNARE required for targeting and fusion of retrograde transport vesicles with the Golgi complex. Required for the integrity of the Golgi complex. The chain is BET1-like protein from Bos taurus (Bovine).